The chain runs to 34 residues: Protamine-Z1/Z2 (34 aa).

Residues 1–34 (PRRRRRSSRPVRRRRRYRRSTAARRRRRVVRRRR) form a disordered region.

In terms of tissue distribution, testis.

Its subcellular location is the nucleus. The protein localises to the chromosome. Its function is as follows. Protamines substitute for histones in the chromatin of sperm during the haploid phase of spermatogenesis. They compact sperm DNA into a highly condensed, stable and inactive complex. This is Protamine-Z1/Z2 from Sarda orientalis (Striped bonito).